Here is a 388-residue protein sequence, read N- to C-terminus: Oxytocin receptor (388 aa).

A disordered region spans residues 1-32 (MEGTPAANWSVELDLGSGVPPGEEGNRTAGPP). At 1–38 (MEGTPAANWSVELDLGSGVPPGEEGNRTAGPPQRNEAL) the chain is on the extracellular side. Residues Asn8 and Asn26 are each glycosylated (N-linked (GlcNAc...) asparagine). Residues 39-63 (ARVEVAVLCLILFLALSGNACVLLA) form a helical membrane-spanning segment. Residues 64 to 74 (LRTTRHKHSRL) lie on the Cytoplasmic side of the membrane. The chain crosses the membrane as a helical span at residues 75 to 97 (FFFMKHLSIADLVVAVFQVLPQL). Residues 98–113 (LWDITFRFYGPDLLCR) lie on the Extracellular side of the membrane. Cys112 and Cys187 are oxidised to a cystine. The helical transmembrane segment at 114 to 135 (LVKYLQVVGMFASTYLLLLMSL) threads the bilayer. Over 136–154 (DRCLAICQPLRSLRRRTDR) the chain is Cytoplasmic. The chain crosses the membrane as a helical span at residues 155–175 (LAVLGTWLGCLVASAPQVHIF). The Extracellular segment spans residues 176-202 (SLREVADGVFDCWAVFIQPWGPKAYVT). A helical membrane pass occupies residues 203 to 225 (WITLAVYIVPVIVLAACYGLISF). The Cytoplasmic portion of the chain corresponds to 226 to 274 (KIWQNLRLKTAAAAAAAEGNDAAGGAGRAALARVSSVKLISKAKIRTVK). The helical transmembrane segment at 275 to 293 (MTFIIVLAFIVCWTPFFFV) threads the bilayer. Topologically, residues 294–308 (QMWSVWDVNAPKEAS) are extracellular. Residues 309–331 (AFIIAMLLASLNSCCNPWIYMLF) traverse the membrane as a helical segment. At 332–388 (TGHLFHELVQRFFCCSARYLKGSRPGETSVSKKSNSSTFVLSRRSSSQRSCSQPSSA) the chain is on the cytoplasmic side. The disordered stretch occupies residues 354 to 388 (SRPGETSVSKKSNSSTFVLSRRSSSQRSCSQPSSA). Residues Ser365 and Ser367 each carry the phosphoserine modification. Low complexity predominate over residues 365 to 388 (SNSSTFVLSRRSSSQRSCSQPSSA).

Belongs to the G-protein coupled receptor 1 family. Vasopressin/oxytocin receptor subfamily.

It localises to the cell membrane. Its function is as follows. Receptor for oxytocin. The activity of this receptor is mediated by G proteins which activate a phosphatidylinositol-calcium second messenger system. This Rattus norvegicus (Rat) protein is Oxytocin receptor (Oxtr).